The chain runs to 448 residues: Argininosuccinate synthase (448 aa).

ATP is bound by residues 17–25 (AFSGGLDTS) and A43. Y99 contacts L-citrulline. Residues G129 and T131 each coordinate ATP. T131, N135, and D136 together coordinate L-aspartate. L-citrulline is bound at residue N135. D136 is an ATP binding site. R139 and S192 together coordinate L-citrulline. D194 serves as a coordination point for ATP. Positions 201, 203, and 280 each coordinate L-citrulline.

It belongs to the argininosuccinate synthase family. Type 2 subfamily. As to quaternary structure, homotetramer.

Its subcellular location is the cytoplasm. The catalysed reaction is L-citrulline + L-aspartate + ATP = 2-(N(omega)-L-arginino)succinate + AMP + diphosphate + H(+). The protein operates within amino-acid biosynthesis; L-arginine biosynthesis; L-arginine from L-ornithine and carbamoyl phosphate: step 2/3. The chain is Argininosuccinate synthase from Pectobacterium atrosepticum (strain SCRI 1043 / ATCC BAA-672) (Erwinia carotovora subsp. atroseptica).